A 144-amino-acid chain; its full sequence is Large ribosomal subunit protein uL15 (144 aa).

Residues Met-1–Leu-57 form a disordered region. Residues Arg-21–Gly-31 show a composition bias toward gly residues. The segment covering Gly-32–Gly-44 has biased composition (basic residues).

The protein belongs to the universal ribosomal protein uL15 family. In terms of assembly, part of the 50S ribosomal subunit.

In terms of biological role, binds to the 23S rRNA. This Vibrio vulnificus (strain CMCP6) protein is Large ribosomal subunit protein uL15.